A 319-amino-acid polypeptide reads, in one-letter code: Acetyl-coenzyme A carboxylase carboxyl transferase subunit alpha (319 aa).

Positions Asp35 to Glu296 constitute a CoA carboxyltransferase C-terminal domain.

It belongs to the AccA family. Acetyl-CoA carboxylase is a heterohexamer composed of biotin carboxyl carrier protein (AccB), biotin carboxylase (AccC) and two subunits each of ACCase subunit alpha (AccA) and ACCase subunit beta (AccD).

It localises to the cytoplasm. It carries out the reaction N(6)-carboxybiotinyl-L-lysyl-[protein] + acetyl-CoA = N(6)-biotinyl-L-lysyl-[protein] + malonyl-CoA. Its pathway is lipid metabolism; malonyl-CoA biosynthesis; malonyl-CoA from acetyl-CoA: step 1/1. In terms of biological role, component of the acetyl coenzyme A carboxylase (ACC) complex. First, biotin carboxylase catalyzes the carboxylation of biotin on its carrier protein (BCCP) and then the CO(2) group is transferred by the carboxyltransferase to acetyl-CoA to form malonyl-CoA. This is Acetyl-coenzyme A carboxylase carboxyl transferase subunit alpha from Aliivibrio fischeri (strain ATCC 700601 / ES114) (Vibrio fischeri).